Consider the following 211-residue polypeptide: MRVRNRKGATELLEANPQYVVLNPLEAKAKWRDLFGNDNPIHVEVGSGKGAFVSGMAKQNPDINYIGIDIQKSVLSYALDKVLEVGVPNIKLLWVDGSDLTDYFEDGEIDRLYLNFSDPWPKKRHEKRRLTYKTFLDTFKRILPENGEIHFKTDNRGLFEYSLVSFSQYGMKLNGVWLDLHASDFEGNVMTEYEQKFSNKGQVIYRVEAEF.

Positions 44, 69, 96, and 118 each coordinate S-adenosyl-L-methionine. The active site involves aspartate 118. Lysine 122 provides a ligand contact to substrate. The interaction with RNA stretch occupies residues 124–129 (RHEKRR). Residues aspartate 154 and 191–194 (TEYE) each bind substrate.

It belongs to the class I-like SAM-binding methyltransferase superfamily. TrmB family.

It carries out the reaction guanosine(46) in tRNA + S-adenosyl-L-methionine = N(7)-methylguanosine(46) in tRNA + S-adenosyl-L-homocysteine. Its pathway is tRNA modification; N(7)-methylguanine-tRNA biosynthesis. Functionally, catalyzes the formation of N(7)-methylguanine at position 46 (m7G46) in tRNA. The protein is tRNA (guanine-N(7)-)-methyltransferase of Streptococcus pneumoniae (strain JJA).